We begin with the raw amino-acid sequence, 219 residues long: Small ribosomal subunit protein uS3c (219 aa).

The region spanning 43-118 is the KH type-2 domain; the sequence is IKNYVQNNMI…KLNITITRIE (76 aa).

This sequence belongs to the universal ribosomal protein uS3 family. As to quaternary structure, part of the 30S ribosomal subunit.

It is found in the plastid. This is Small ribosomal subunit protein uS3c (rps3) from Cuscuta exaltata (Tall dodder).